The following is a 240-amino-acid chain: Uridylate kinase (240 aa).

9-12 (KLSG) provides a ligand contact to ATP. Residue Gly51 coordinates UMP. The ATP site is built by Gly52 and Arg56. UMP contacts are provided by residues Asp71 and 132–139 (TGNPFFTT). The ATP site is built by Thr159, Tyr165, and Asp168.

This sequence belongs to the UMP kinase family. In terms of assembly, homohexamer.

Its subcellular location is the cytoplasm. It carries out the reaction UMP + ATP = UDP + ADP. It functions in the pathway pyrimidine metabolism; CTP biosynthesis via de novo pathway; UDP from UMP (UMPK route): step 1/1. Its activity is regulated as follows. Inhibited by UTP. In terms of biological role, catalyzes the reversible phosphorylation of UMP to UDP. The polypeptide is Uridylate kinase (Synechococcus elongatus (strain ATCC 33912 / PCC 7942 / FACHB-805) (Anacystis nidulans R2)).